A 342-amino-acid polypeptide reads, in one-letter code: S-adenosylmethionine:tRNA ribosyltransferase-isomerase (342 aa).

The protein belongs to the QueA family. Monomer.

The protein localises to the cytoplasm. It carries out the reaction 7-aminomethyl-7-carbaguanosine(34) in tRNA + S-adenosyl-L-methionine = epoxyqueuosine(34) in tRNA + adenine + L-methionine + 2 H(+). The protein operates within tRNA modification; tRNA-queuosine biosynthesis. Transfers and isomerizes the ribose moiety from AdoMet to the 7-aminomethyl group of 7-deazaguanine (preQ1-tRNA) to give epoxyqueuosine (oQ-tRNA). The chain is S-adenosylmethionine:tRNA ribosyltransferase-isomerase from Streptococcus mutans serotype c (strain ATCC 700610 / UA159).